The following is a 350-amino-acid chain: MPVLHNRISNDALKARMLAETEPRTTISFYKYFTIVDPQSTRDALYQMFTSLNVFGRVYLAREGINAQISVPQSQVAAFREQLYAFDPALNGLRLNIALDDDGKSFWVLRMKVRERIVADGIDDPNFDASDVGEYLKAAEVNAMLDDPDAVFIDMRNHYEYEVGHFENALEIPADTFREQLPKAVEMMQEHRDKKIVMYCTGGIRCEKASAWMKHNGFNKVWHIEGGIIEYARKAREQGLPVRFIGKNFVFDERMGERISDEVIAHCHQCGAPCDSHTNCKNDGCHLLFIQCPACAEKFKGCCSELCCEESSLPEEEQRRRRAGRENGNKIFNKSRGRLNTQLGIPDPAE.

One can recognise a Rhodanese domain in the interval 146–240; it reads DDPDAVFIDM…YARKAREQGL (95 aa). Catalysis depends on Cys-200, which acts as the Cysteine persulfide intermediate. The segment at 314 to 350 is disordered; sequence PEEEQRRRRAGRENGNKIFNKSRGRLNTQLGIPDPAE. The segment covering 316–328 has biased composition (basic and acidic residues); the sequence is EEQRRRRAGRENG.

This sequence belongs to the TrhO family.

The enzyme catalyses uridine(34) in tRNA + AH2 + O2 = 5-hydroxyuridine(34) in tRNA + A + H2O. In terms of biological role, catalyzes oxygen-dependent 5-hydroxyuridine (ho5U) modification at position 34 in tRNAs. This is tRNA uridine(34) hydroxylase from Citrobacter koseri (strain ATCC BAA-895 / CDC 4225-83 / SGSC4696).